The chain runs to 242 residues: UPF0309 protein Oant_1457 (242 aa).

The SIS domain occupies 30–214 (AAELITAAAL…AKLVGKGDAP (185 aa)).

This sequence belongs to the UPF0309 family.

In Brucella anthropi (strain ATCC 49188 / DSM 6882 / CCUG 24695 / JCM 21032 / LMG 3331 / NBRC 15819 / NCTC 12168 / Alc 37) (Ochrobactrum anthropi), this protein is UPF0309 protein Oant_1457.